A 605-amino-acid polypeptide reads, in one-letter code: Ubiquitin carboxyl-terminal hydrolase 2 (605 aa).

The tract at residues 1–200 (MSQLSSTLKR…CPEYLVDYLE (200 aa)) is necessary for interaction with MDM4. Disordered stretches follow at residues 71–107 (LLDY…GSGL) and 237–264 (WETG…KSAQ). Basic and acidic residues predominate over residues 90 to 100 (KRAESQTRGTE). The span at 245 to 255 (PGPSRSSSPGR) shows a compositional bias: low complexity. The region spanning 267–599 (AGLRNLGNTC…DAYLLFYELA (333 aa)) is the USP domain. Residue cysteine 276 is the Nucleophile of the active site. The segment at 403–503 (YLEREDSRIG…FPKILVLHLK (101 aa)) is necessary for interaction with MDM4. 4 residues coordinate Zn(2+): cysteine 425, cysteine 428, cysteine 476, and cysteine 479. Residue histidine 557 is the Proton acceptor of the active site.

The protein belongs to the peptidase C19 family. USP2 subfamily. Homooligomer. Found in trimeric complex with MDM2 and MDM4 and USP2. Interacts with CCND1; the interaction is direct and promotes its stabilization by antagonizing ubiquitin-dependent degradation. Interacts (via N-terminus and C-terminus) with MDM2. Interacts with MDM4. Interacts with PER1. Interacts with KCNQ1; counteracts the NEDD4L-specific down-regulation of I(Ks) and restore plasma membrane localization of KCNQ1. Isoform 4: Interacts with NHERF4 and CLTC. Expressed in mesangial cells of the kidney and in different types of glomerulonephritides (at protein level).

The protein localises to the cytoplasm. It is found in the perinuclear region. It localises to the nucleus. Its subcellular location is the membrane. The enzyme catalyses Thiol-dependent hydrolysis of ester, thioester, amide, peptide and isopeptide bonds formed by the C-terminal Gly of ubiquitin (a 76-residue protein attached to proteins as an intracellular targeting signal).. Cleavage is inhibited by ubiquitin in a dosage-dependent manner. Cleavage is blocked by ubiquitin aldehyde. In terms of biological role, hydrolase that deubiquitinates polyubiquitinated target proteins such as MDM2, MDM4 and CCND1. Isoform 1 and isoform 4 possess both ubiquitin-specific peptidase and isopeptidase activities. Deubiquitinates MDM2 without reversing MDM2-mediated p53/TP53 ubiquitination and thus indirectly promotes p53/TP53 degradation and limits p53 activity. Has no deubiquitinase activity against p53/TP53. Prevents MDM2-mediated degradation of MDM4. Plays a role in the G1/S cell-cycle progression in normal and cancer cells. Regulates the circadian clock by modulating its intrinsic circadian rhythm and its capacity to respond to external cues. Associates with clock proteins and deubiquitinates core clock component PER1 but does not affect its overall stability. Regulates the nucleocytoplasmic shuttling and nuclear retention of PER1 and its repressive role on the clock transcription factors CLOCK and BMAL1. Plays a role in the regulation of myogenic differentiation of embryonic muscle cells. Circadian clock output effector that regulates Ca(2+) absorption in the small intestine. Probably functions by regulating protein levels of the membrane scaffold protein NHERF4 in a rhythmic manner, and is therefore likely to control Ca(2+) membrane permeability mediated by the Ca(2+) channel TRPV6 in the intestine. The polypeptide is Ubiquitin carboxyl-terminal hydrolase 2 (USP2) (Homo sapiens (Human)).